Reading from the N-terminus, the 445-residue chain is MAESPIVNHPEQGLCRDCLSLQKTQTSRRCHACGSPRLIRHKELYRLSLAHVDCDAFYASVEKRDNPDLRDKPLIVGGGKRGVVSTACYLARIHGVRSAMPMFKALEACPDAVVIKPNMEKYARVGREVRQMMRDLTPLVEPISIDEAFLDLSGTERLHKAPPAVVLARFSKRVENEIGITASIGLSYCKYLAKVASDLEKPRGFSVIGEAEALDFLRDKPVGMIWGVGKAFAAKLESDGIRTIGQLQTMEEGALMKAYGTMGQRLYRLSRGQDSRKVEPDHDMKSVSAETTFNTDLSAAGDLVPVLRALSEKVSRRLKAGEIAGRTIVLKLKTQDFKLRTRNRQLGDPTQLADRIFRTGLQLLEKEMDGTRFRLLGIGVSDLSPSDRADPPDLVDIQATKRAVAESAIDRLRNKFGLNAVETGYTFSKGNLARTQTPTDRDNEP.

A UmuC domain is found at 49–229 (LAHVDCDAFY…KPVGMIWGVG (181 aa)). The Mg(2+) site is built by Asp53 and Asp146. Glu147 is a catalytic residue.

Belongs to the DNA polymerase type-Y family. As to quaternary structure, monomer. Mg(2+) is required as a cofactor.

It is found in the cytoplasm. The catalysed reaction is DNA(n) + a 2'-deoxyribonucleoside 5'-triphosphate = DNA(n+1) + diphosphate. Functionally, poorly processive, error-prone DNA polymerase involved in untargeted mutagenesis. Copies undamaged DNA at stalled replication forks, which arise in vivo from mismatched or misaligned primer ends. These misaligned primers can be extended by PolIV. Exhibits no 3'-5' exonuclease (proofreading) activity. May be involved in translesional synthesis, in conjunction with the beta clamp from PolIII. The polypeptide is DNA polymerase IV (Brucella melitensis biotype 1 (strain ATCC 23456 / CCUG 17765 / NCTC 10094 / 16M)).